Consider the following 713-residue polypeptide: Leucine-rich repeat-containing protein 4B (713 aa).

The signal sequence occupies residues 1-35 (MARARGSPCPPLPPGRMSWPHGALLFLWLFSPPLG). The Extracellular segment spans residues 36 to 576 (AGGGGVAVTS…DLDDVMKTTK (541 aa)). Positions 48–86 (GGGSPPATSCPVACSCSNQASRVICTRRDLAEVPASIPV) constitute an LRRNT domain. LRR repeat units follow at residues 87–108 (NTRY…TFKH), 111–132 (HLEI…AFNG), 135–156 (SLNT…AFEY), 159–180 (KLRE…AFNR), 183–205 (SLRR…AFEG), 208–229 (NLRY…TALV), 230–251 (RLEE…SFQG), 254–275 (SLRK…AFDD), and 278–299 (SLEE…LFTP). An N-linked (GlcNAc...) asparagine glycan is attached at Asn-224. 8 N-linked (GlcNAc...) asparagine glycosylation sites follow: Asn-283, Asn-333, Asn-374, Asn-400, Asn-422, Asn-425, Asn-444, and Asn-452. The LRRCT domain maps to 311–363 (NPWHCNCDVLWLSWWLKETVPSNTTCCARCHAPAGLKGRYIGELDQSHFTCYA). Residues 364-452 (PVIVEPPTDL…GNTTASATLN (89 aa)) enclose the Ig-like C2-type domain. Cys-385 and Cys-436 are disulfide-bonded. Residues 497-551 (TQPGEEALQPRGTEKEPPGPTTDGVWGGGRPGDAAGPASSSTTAPAPRSSRPTEK) are disordered. Over residues 528–546 (GDAAGPASSSTTAPAPRSS) the composition is skewed to low complexity. Residues 577–597 (IIIGCFVAITFMAAVMLVAFY) traverse the membrane as a helical segment. Over 598–713 (KLRKQHQLHK…SKENVQETQI (116 aa)) the chain is Cytoplasmic. Ser-693 carries the phosphoserine modification. The tract at residues 694 to 713 (IHEPLLFKSGSKENVQETQI) is disordered. The segment covering 703 to 713 (GSKENVQETQI) has biased composition (basic and acidic residues).

As to quaternary structure, interacts with PTPRF. Interacts with DLG4. N-glycosylated. O-glycosylated; contains sialic acid.

It localises to the membrane. It is found in the presynaptic cell membrane. Functionally, synaptic adhesion protein. Regulates the formation of excitatory synapses. The trans-synaptic adhesion between LRRC4B and PTPRF regulates the formation of excitatory synapses in a bidirectional manner. In Homo sapiens (Human), this protein is Leucine-rich repeat-containing protein 4B (LRRC4B).